Reading from the N-terminus, the 886-residue chain is Leucine--tRNA ligase (886 aa).

The 'HIGH' region motif lies at 51 to 61; sequence PYPSGRIHMGH. The short motif at 644-648 is the 'KMSKS' region element; sequence KMSKS. ATP is bound at residue lysine 647.

The protein belongs to the class-I aminoacyl-tRNA synthetase family.

The protein resides in the cytoplasm. The catalysed reaction is tRNA(Leu) + L-leucine + ATP = L-leucyl-tRNA(Leu) + AMP + diphosphate. The chain is Leucine--tRNA ligase from Bartonella tribocorum (strain CIP 105476 / IBS 506).